A 420-amino-acid polypeptide reads, in one-letter code: Serine/threonine transporter SstT (420 aa).

Helical transmembrane passes span 14-34 (IMIGIVIGTTLGFLVPEWTFI), 40-60 (LFVGALKAIAPILVFVLIIAS), 71-91 (YVGSILVVYLLATFLAAVVAV), 172-192 (ITTVVQMIIGIAPIGILGLVF), 210-230 (LLLLIGTMAVVALVVYPAIVF), 283-303 (IPLGATINMGGAAITITIMTL), 309-329 (LGMSVPIYLALLLSIIAAVSA), 332-352 (ASGIAGGSLLLIPLACSLFGI), and 356-376 (IAMQVVGVGFIVGVVQDSIET).

This sequence belongs to the dicarboxylate/amino acid:cation symporter (DAACS) (TC 2.A.23) family.

It localises to the cell membrane. The enzyme catalyses L-serine(in) + Na(+)(in) = L-serine(out) + Na(+)(out). It carries out the reaction L-threonine(in) + Na(+)(in) = L-threonine(out) + Na(+)(out). In terms of biological role, involved in the import of serine and threonine into the cell, with the concomitant import of sodium (symport system). This is Serine/threonine transporter SstT from Enterococcus faecalis (strain ATCC 700802 / V583).